Reading from the N-terminus, the 415-residue chain is 4-hydroxy-3-methylbut-2-enyl diphosphate reductase (415 aa).

A [4Fe-4S] cluster-binding site is contributed by Cys66. Position 96 (His96) interacts with (2E)-4-hydroxy-3-methylbut-2-enyl diphosphate. His96 contacts dimethylallyl diphosphate. Position 96 (His96) interacts with isopentenyl diphosphate. Cys158 lines the [4Fe-4S] cluster pocket. His186 lines the (2E)-4-hydroxy-3-methylbut-2-enyl diphosphate pocket. A dimethylallyl diphosphate-binding site is contributed by His186. Isopentenyl diphosphate is bound at residue His186. Catalysis depends on Glu188, which acts as the Proton donor. Residue Thr259 coordinates (2E)-4-hydroxy-3-methylbut-2-enyl diphosphate. Position 297 (Cys297) interacts with [4Fe-4S] cluster. Ser326, Ser327, Asn328, and Ser388 together coordinate (2E)-4-hydroxy-3-methylbut-2-enyl diphosphate. Dimethylallyl diphosphate is bound by residues Ser326, Ser327, Asn328, and Ser388. The isopentenyl diphosphate site is built by Ser326, Ser327, Asn328, and Ser388.

It belongs to the IspH family. Requires [4Fe-4S] cluster as cofactor.

It carries out the reaction isopentenyl diphosphate + 2 oxidized [2Fe-2S]-[ferredoxin] + H2O = (2E)-4-hydroxy-3-methylbut-2-enyl diphosphate + 2 reduced [2Fe-2S]-[ferredoxin] + 2 H(+). It catalyses the reaction dimethylallyl diphosphate + 2 oxidized [2Fe-2S]-[ferredoxin] + H2O = (2E)-4-hydroxy-3-methylbut-2-enyl diphosphate + 2 reduced [2Fe-2S]-[ferredoxin] + 2 H(+). It participates in isoprenoid biosynthesis; dimethylallyl diphosphate biosynthesis; dimethylallyl diphosphate from (2E)-4-hydroxy-3-methylbutenyl diphosphate: step 1/1. It functions in the pathway isoprenoid biosynthesis; isopentenyl diphosphate biosynthesis via DXP pathway; isopentenyl diphosphate from 1-deoxy-D-xylulose 5-phosphate: step 6/6. Functionally, catalyzes the conversion of 1-hydroxy-2-methyl-2-(E)-butenyl 4-diphosphate (HMBPP) into a mixture of isopentenyl diphosphate (IPP) and dimethylallyl diphosphate (DMAPP). Acts in the terminal step of the DOXP/MEP pathway for isoprenoid precursor biosynthesis. The protein is 4-hydroxy-3-methylbut-2-enyl diphosphate reductase of Acaryochloris marina (strain MBIC 11017).